Here is a 244-residue protein sequence, read N- to C-terminus: Carboxy-S-adenosyl-L-methionine synthase (244 aa).

Residues Tyr-40, 65 to 67 (GCS), 90 to 91 (DN), 119 to 120 (DL), Asn-134, and Arg-201 each bind S-adenosyl-L-methionine.

The protein belongs to the class I-like SAM-binding methyltransferase superfamily. Cx-SAM synthase family. As to quaternary structure, homodimer.

It carries out the reaction prephenate + S-adenosyl-L-methionine = carboxy-S-adenosyl-L-methionine + 3-phenylpyruvate + H2O. Functionally, catalyzes the conversion of S-adenosyl-L-methionine (SAM) to carboxy-S-adenosyl-L-methionine (Cx-SAM). In Trichlorobacter lovleyi (strain ATCC BAA-1151 / DSM 17278 / SZ) (Geobacter lovleyi), this protein is Carboxy-S-adenosyl-L-methionine synthase.